The primary structure comprises 234 residues: OVARIAN TUMOR DOMAIN-containing deubiquitinating enzyme 3 (234 aa).

Residues 76–234 (YAVDRVKGDG…SGRNHYDLLR (159 aa)) form the OTU domain. Residues 81–87 (VKGDGRC) form a cys-loop region. Aspartate 84 is a catalytic residue. The active-site Nucleophile is the cysteine 87. Residues 154-164 (IGRHDFWGGES) are variable-loop. Residues 224 to 229 (YSGRNH) form a his-loop region. The active site involves histidine 229.

It belongs to the peptidase C85 family.

It carries out the reaction Thiol-dependent hydrolysis of ester, thioester, amide, peptide and isopeptide bonds formed by the C-terminal Gly of ubiquitin (a 76-residue protein attached to proteins as an intracellular targeting signal).. Functionally, hydrolase that can remove conjugated ubiquitin from proteins in vitro and may therefore play an important regulatory role at the level of protein turnover by preventing degradation. Cysteine protease with a preference for 'Lys-63' over 'Lys-48' over 'Met-1' -linked ubiquitin (UB) tetramers (e.g. Ub3 and Ub4) as substrates. Also cleaves RUB-GST fusion. This chain is OVARIAN TUMOR DOMAIN-containing deubiquitinating enzyme 3, found in Arabidopsis thaliana (Mouse-ear cress).